A 220-amino-acid chain; its full sequence is MSDGTAGSYSGVERRGLMFVLSSPSGAGKTTLSRMLVEQMPGLQMSVSATTRPMRPGEVDGRDYYFVDRPKFDEMVGAGEFLEWANVFDNRYGTPRAPVEAALAVGRDVLFDIDWQGTQQLRSRAGSDVVSVFILPPSVQALEHRLHTRAQDSHEVIRGRMKKAGDEMSHFDAYDYIVVNDNIGVAFESVRSILRAEQLKRERQVGLDAFVRGMRQQLEG.

In terms of domain architecture, Guanylate kinase-like spans 16–195 (GLMFVLSSPS…AFESVRSILR (180 aa)). 23–30 (SPSGAGKT) lines the ATP pocket.

The protein belongs to the guanylate kinase family.

It is found in the cytoplasm. It carries out the reaction GMP + ATP = GDP + ADP. In terms of biological role, essential for recycling GMP and indirectly, cGMP. The protein is Guanylate kinase of Rhodopseudomonas palustris (strain ATCC BAA-98 / CGA009).